A 142-amino-acid polypeptide reads, in one-letter code: Nucleoside diphosphate kinase (142 aa).

ATP-binding residues include K11, F59, R87, T93, R104, and N114. Catalysis depends on H117, which acts as the Pros-phosphohistidine intermediate.

Belongs to the NDK family. Homotetramer. It depends on Mg(2+) as a cofactor.

It is found in the cytoplasm. The catalysed reaction is dZDP + ATP = dZTP + ADP. It carries out the reaction a 2'-deoxyribonucleoside 5'-diphosphate + ATP = a 2'-deoxyribonucleoside 5'-triphosphate + ADP. It catalyses the reaction a ribonucleoside 5'-diphosphate + ATP = a ribonucleoside 5'-triphosphate + ADP. Its pathway is purine metabolism. In terms of biological role, major role in the synthesis of nucleoside triphosphates other than ATP. The ATP gamma phosphate is transferred to the NDP beta phosphate via a ping-pong mechanism, using a phosphorylated active-site intermediate. (Microbial infection) Catalyzes the phosphorylation of dZDP to dZTP, when the bacterium is infected by a phage that produces the substrate for the synthesis of dZTP (2- amino-2'-deoxyadenosine 5'-triphosphate), which is then used by the phage as a DNA polymerase substrate. The polypeptide is Nucleoside diphosphate kinase (Vibrio cholerae serotype O1 (strain ATCC 39315 / El Tor Inaba N16961)).